The chain runs to 545 residues: Eukaryotic translation initiation factor 3 subunit D-2 (545 aa).

The disordered stretch occupies residues 94–148 (FQRGRFRGNTRNNPRTRGRTGRGGAVTGTGGNQPGVGVNERTKYGKGRDNRRQMG). The span at 95–113 (QRGRFRGNTRNNPRTRGRT) shows a compositional bias: basic residues. Positions 114-127 (GRGGAVTGTGGNQP) are enriched in gly residues. Basic and acidic residues predominate over residues 133–145 (ERTKYGKGRDNRR). The RNA gate stretch occupies residues 287–301 (QFDLLTVNETALEPP).

The protein belongs to the eIF-3 subunit D family. As to quaternary structure, component of the eukaryotic translation initiation factor 3 (eIF-3) complex. The eIF-3 complex interacts with pix.

It localises to the cytoplasm. Functionally, mRNA cap-binding component of the eukaryotic translation initiation factor 3 (eIF-3) complex, which is involved in protein synthesis of a specialized repertoire of mRNAs and, together with other initiation factors, stimulates binding of mRNA and methionyl-tRNAi to the 40S ribosome. The eIF-3 complex specifically targets and initiates translation of a subset of mRNAs involved in cell proliferation. In the eIF-3 complex, eif3d specifically recognizes and binds the 7-methylguanosine cap of a subset of mRNAs. This Drosophila pseudoobscura pseudoobscura (Fruit fly) protein is Eukaryotic translation initiation factor 3 subunit D-2.